A 213-amino-acid chain; its full sequence is Ion-translocating oxidoreductase complex subunit A (213 aa).

The Periplasmic segment spans residues 1–24 (MLLLWQSRIMPGSEANIYITMTEY). Residues 25–45 (LLLLIGTVLVNNFVLVKFLGL) traverse the membrane as a helical segment. The Cytoplasmic portion of the chain corresponds to 46–58 (CPFMGVSKKLETA). A helical membrane pass occupies residues 59-79 (IGMGLATTFVLTLASVCAYLV). Residues 80-86 (ESYVLRP) are Periplasmic-facing. A helical transmembrane segment spans residues 87 to 107 (LGIEYLRTMSFILVIAVVVQF). The Cytoplasmic segment spans residues 108–121 (TEMVVHKTSPTLYR). The helical transmembrane segment at 122-142 (LLGIFLPLITTNCAVLGVALL) threads the bilayer. The Periplasmic segment spans residues 143-153 (NINENHNFIQS). A helical membrane pass occupies residues 154–174 (IIYGFGAAVGFSLVLILFASM). At 175 to 190 (RERIHVADVPAPFKGA) the chain is on the cytoplasmic side. The helical transmembrane segment at 191 to 211 (SIAMITAGLMSLAFMGFTGLV) threads the bilayer. Residues 212 to 213 (KL) lie on the Periplasmic side of the membrane.

Belongs to the NqrDE/RnfAE family. The complex is composed of six subunits: RnfA, RnfB, RnfC, RnfD, RnfE and RnfG.

It localises to the cell inner membrane. In terms of biological role, part of a membrane-bound complex that couples electron transfer with translocation of ions across the membrane. In Vibrio cholerae serotype O1 (strain ATCC 39541 / Classical Ogawa 395 / O395), this protein is Ion-translocating oxidoreductase complex subunit A.